The chain runs to 60 residues: UPF0434 protein ESA_02427 (60 aa).

Belongs to the UPF0434 family.

The polypeptide is UPF0434 protein ESA_02427 (Cronobacter sakazakii (strain ATCC BAA-894) (Enterobacter sakazakii)).